The primary structure comprises 356 residues: Major capsid protein (356 aa).

It belongs to the baculoviridae p39 family.

Its subcellular location is the virion. In Lepidoptera (butterflies and moths), this protein is Major capsid protein (P39).